The chain runs to 215 residues: Cytochrome b-c1 complex subunit Rieske, mitochondrial (215 aa).

Residues 1 to 22 constitute a mitochondrion transit peptide; the sequence is MLGIRSSVKTCFKPMSLTSKRL. Residues 23–30 constitute a propeptide, removed in mature form; that stretch reads ISQSLLAS. Over 31-50 the chain is Mitochondrial matrix; sequence KSTYRTPNFDDVLKENNDAD. The chain crosses the membrane as a helical span at residues 51-80; it reads KGRSYAYFMVGAMGLLSSAGAKSTVETFIS. Residues 81-215 lie on the Mitochondrial intermembrane side of the membrane; it reads SMTATADVLA…EFDGDKVIVG (135 aa). Residues 90–93 form a hinge region; the sequence is AMAK. Residues 123-214 form the Rieske domain; that stretch reads PHEIQEANSV…YEFDGDKVIV (92 aa). Residues C159, H161, C178, and H181 each contribute to the [2Fe-2S] cluster site. A disulfide bridge links C164 with C180.

It belongs to the Rieske iron-sulfur protein family. In terms of assembly, component of the ubiquinol-cytochrome c oxidoreductase (cytochrome b-c1 complex, complex III, CIII), a multisubunit enzyme composed of 10 subunits. The complex is composed of 3 respiratory subunits cytochrome b (COB), cytochrome c1 (CYT1) and Rieske protein (RIP1), 2 core protein subunits COR1 and QCR2, and 5 low-molecular weight protein subunits QCR6, QCR7, QCR8, QCR9 and QCR10. The complex exists as an obligatory dimer and forms supercomplexes (SCs) in the inner mitochondrial membrane with a monomer or a dimer of cytochrome c oxidase (complex IV, CIV), resulting in 2 different assemblies (supercomplexes III(2)IV and III(2)IV(2)). RIP1 interacts with QCR10 on the intermembrane space (IMS) side, and with QCR9. It depends on [2Fe-2S] cluster as a cofactor. Post-translationally, processed by both the mitochondrial processing peptidase (MPP) and the mitochondrial intermediate protease (MIP). Initially, MPP removes 22 amino acids from the newly imported precursor in the mitochondrial matrix. This proteolytic processing is then followed by a second proteolytic cleavage by MIP, which removes an octapeptide to generate mature-sized RIP1.

The protein localises to the mitochondrion inner membrane. The enzyme catalyses a quinol + 2 Fe(III)-[cytochrome c](out) = a quinone + 2 Fe(II)-[cytochrome c](out) + 2 H(+)(out). Its function is as follows. Component of the ubiquinol-cytochrome c oxidoreductase, a multisubunit transmembrane complex that is part of the mitochondrial electron transport chain which drives oxidative phosphorylation. The respiratory chain contains 3 multisubunit complexes succinate dehydrogenase (complex II, CII), ubiquinol-cytochrome c oxidoreductase (cytochrome b-c1 complex, complex III, CIII) and cytochrome c oxidase (complex IV, CIV), that cooperate to transfer electrons derived from NADH and succinate to molecular oxygen, creating an electrochemical gradient over the inner membrane that drives transmembrane transport and the ATP synthase. The cytochrome b-c1 complex catalyzes electron transfer from ubiquinol to cytochrome c, linking this redox reaction to translocation of protons across the mitochondrial inner membrane, with protons being carried across the membrane as hydrogens on the quinol. In the process called Q cycle, 2 protons are consumed from the matrix, 4 protons are released into the intermembrane space and 2 electrons are passed to cytochrome c. The Rieske protein is a catalytic core subunit containing a [2Fe-2S] iron-sulfur cluster. It cycles between 2 conformational states during catalysis to transfer electrons from the quinol bound in the Q(0) site in cytochrome b (COB) to cytochrome c1 (CYT1). This is Cytochrome b-c1 complex subunit Rieske, mitochondrial (RIP1) from Saccharomyces cerevisiae (strain ATCC 204508 / S288c) (Baker's yeast).